Consider the following 603-residue polypeptide: Coiled-coil domain-containing protein 148 (603 aa).

Coiled coils occupy residues 365 to 429 and 461 to 510; these read LAKD…KKKK and EQSL…KQVA.

This Macaca fascicularis (Crab-eating macaque) protein is Coiled-coil domain-containing protein 148 (CCDC148).